The chain runs to 91 residues: Acylphosphatase (91 aa).

Residues 5 to 91 (CSKFIVSGHV…EHDYQGFEIL (87 aa)) form the Acylphosphatase-like domain. Catalysis depends on residues arginine 20 and asparagine 38.

Belongs to the acylphosphatase family.

It carries out the reaction an acyl phosphate + H2O = a carboxylate + phosphate + H(+). The sequence is that of Acylphosphatase (acyP) from Vibrio cholerae serotype O1 (strain ATCC 39315 / El Tor Inaba N16961).